A 168-amino-acid polypeptide reads, in one-letter code: Small ribosomal subunit protein uS5 (168 aa).

An S5 DRBM domain is found at 13-76 (LEENVVAINR…EDAKRKLITV (64 aa)).

It belongs to the universal ribosomal protein uS5 family. In terms of assembly, part of the 30S ribosomal subunit. Contacts proteins S4 and S8.

With S4 and S12 plays an important role in translational accuracy. In terms of biological role, located at the back of the 30S subunit body where it stabilizes the conformation of the head with respect to the body. This chain is Small ribosomal subunit protein uS5, found in Leuconostoc mesenteroides subsp. mesenteroides (strain ATCC 8293 / DSM 20343 / BCRC 11652 / CCM 1803 / JCM 6124 / NCDO 523 / NBRC 100496 / NCIMB 8023 / NCTC 12954 / NRRL B-1118 / 37Y).